A 245-amino-acid chain; its full sequence is 8-amino-3,8-dideoxy-manno-octulosonate cytidylyltransferase (245 aa).

It belongs to the KdsB family.

Its subcellular location is the cytoplasm. It carries out the reaction 8-amino-3,8-dideoxy-alpha-D-manno-octulosonate + CTP = CMP-8-amino-3,8-dideoxy-alpha-D-manno-oct-2-ulosonate + diphosphate. Its pathway is bacterial outer membrane biogenesis; lipopolysaccharide biosynthesis. Functionally, activates KDO8N (a required 8-carbon sugar) for incorporation into bacterial lipopolysaccharide in the Shewanella genus. This Shewanella amazonensis (strain ATCC BAA-1098 / SB2B) protein is 8-amino-3,8-dideoxy-manno-octulosonate cytidylyltransferase.